The chain runs to 206 residues: MKLLLKYFPDLTEEQRKQFAALYELYIDWNSKINVISRKDIENLYEHHVLHSLGIARIIRFRAGSSVMDLGTGGGFPGIPLAILFPDTKFHLVDSIGKKVRVATEVANAIGLKNVTFRHARAEEEKQTFDFVVSRAVMPLADLIKIIRKNISPKQQNALPNGLICLKGGELEHEAMPFKHKTSMHNLNEDFDEEFFQTKKVVYVTI.

Residues G71, F76, 122 to 123 (AE), and R135 each bind S-adenosyl-L-methionine.

The protein belongs to the methyltransferase superfamily. RNA methyltransferase RsmG family.

It localises to the cytoplasm. In terms of biological role, specifically methylates the N7 position of a guanine in 16S rRNA. This chain is Ribosomal RNA small subunit methyltransferase G, found in Bacteroides fragilis (strain ATCC 25285 / DSM 2151 / CCUG 4856 / JCM 11019 / LMG 10263 / NCTC 9343 / Onslow / VPI 2553 / EN-2).